The chain runs to 387 residues: tRNA N6-adenosine threonylcarbamoyltransferase (387 aa).

Fe cation-binding residues include His112 and His116. Substrate is bound by residues 134–138 (LASGG), Asp167, Gly180, and Asn325. Asp353 is a Fe cation binding site.

It belongs to the KAE1 / TsaD family. Fe(2+) serves as cofactor.

It localises to the cytoplasm. The catalysed reaction is L-threonylcarbamoyladenylate + adenosine(37) in tRNA = N(6)-L-threonylcarbamoyladenosine(37) in tRNA + AMP + H(+). In terms of biological role, required for the formation of a threonylcarbamoyl group on adenosine at position 37 (t(6)A37) in tRNAs that read codons beginning with adenine. Is involved in the transfer of the threonylcarbamoyl moiety of threonylcarbamoyl-AMP (TC-AMP) to the N6 group of A37, together with TsaE and TsaB. TsaD likely plays a direct catalytic role in this reaction. The sequence is that of tRNA N6-adenosine threonylcarbamoyltransferase from Rickettsia prowazekii (strain Madrid E).